Here is a 560-residue protein sequence, read N- to C-terminus: uncharacterized protein (560 aa).

At 1-17 (MEPKRKSGSLAKHDLPQ) the chain is on the cytoplasmic side. Residues 18–38 (FYLLIMLYLAQGIPVGLAFGT) form a helical membrane-spanning segment. At 39–54 (VPFLLKSLAKETSFTS) the chain is on the extracellular side. The chain crosses the membrane as a helical span at residues 55-75 (LGIFSMATYPYSLKIIWSPIV). Residues 76 to 88 (DSLYNKRIGRRRS) lie on the Cytoplasmic side of the membrane. Residues 89–109 (WIIPVQFVSGFVLWALGWCIS) traverse the membrane as a helical segment. The Extracellular portion of the chain corresponds to 110 to 139 (QGIIFDGVDDAFHNRGNGTLHSVSIKNLTW). The chain crosses the membrane as a helical span at residues 140–160 (WFGLLVFLCATQDIAVDGWAL). Residues 161–172 (TILSKESLSYAS) lie on the Cytoplasmic side of the membrane. The helical transmembrane segment at 173–193 (TAQTIGLNIGYFMSFTIFLSL) threads the bilayer. Residues 194 to 214 (NSSDFANKYFRNIPLDHGFIS) are Extracellular-facing. Residues 215-235 (LGGYMKFSGMLYIVITIYIIF) traverse the membrane as a helical segment. Residues 236-329 (CTKEKPYVEY…KLLEQGFKRE (94 aa)) are Cytoplasmic-facing. Residues 330 to 350 (DLAVTVLIDLPFEIIFGYYVV) traverse the membrane as a helical segment. Residues 351 to 374 (KWSSDKDPMIRDNRRLRNSTGTNK) lie on the Extracellular side of the membrane. A helical transmembrane segment spans residues 375-395 (VIKFLVGDAGVLTPWLWGFLG). Residues 396 to 421 (RLAAAVLGSYVVKQFPKDGEISTGYF) are Cytoplasmic-facing. The helical transmembrane segment at 422–442 (CLVIFQHLLGSFMNTVQFIGI) threads the bilayer. Residues 443–521 (SAFHTRVADP…LNGTVTILRD (79 aa)) are Extracellular-facing. A helical membrane pass occupies residues 522 to 542 (GYYITNLICIVVGLFLYFGYL). Residues 543–560 (KRKILHLQSLPISSWRCT) are Cytoplasmic-facing.

It is found in the membrane. This is an uncharacterized protein from Saccharomyces cerevisiae (strain ATCC 204508 / S288c) (Baker's yeast).